The sequence spans 163 residues: ATP synthase subunit b 1 (163 aa).

Residues 5 to 25 form a helical membrane-spanning segment; sequence FDATFFAFVGLVLFLALVVYL.

This sequence belongs to the ATPase B chain family. F-type ATPases have 2 components, F(1) - the catalytic core - and F(0) - the membrane proton channel. F(1) has five subunits: alpha(3), beta(3), gamma(1), delta(1), epsilon(1). F(0) has three main subunits: a(1), b(2) and c(10-14). The alpha and beta chains form an alternating ring which encloses part of the gamma chain. F(1) is attached to F(0) by a central stalk formed by the gamma and epsilon chains, while a peripheral stalk is formed by the delta and b chains.

It localises to the cell inner membrane. Functionally, f(1)F(0) ATP synthase produces ATP from ADP in the presence of a proton or sodium gradient. F-type ATPases consist of two structural domains, F(1) containing the extramembraneous catalytic core and F(0) containing the membrane proton channel, linked together by a central stalk and a peripheral stalk. During catalysis, ATP synthesis in the catalytic domain of F(1) is coupled via a rotary mechanism of the central stalk subunits to proton translocation. Its function is as follows. Component of the F(0) channel, it forms part of the peripheral stalk, linking F(1) to F(0). In Rhizobium leguminosarum bv. trifolii (strain WSM2304), this protein is ATP synthase subunit b 1.